A 277-amino-acid chain; its full sequence is Raffinose operon transcriptional regulatory protein RafR (277 aa).

The HTH araC/xylS-type domain occupies 176-274; that stretch reads NLAVSYLQEN…GASPSYYRKS (99 aa). DNA-binding regions (H-T-H motif) lie at residues 193–214 and 241–264; these read MDLC…KTHA and VQSI…KRYS.

Involved in the regulation of the raffinose-operon. The polypeptide is Raffinose operon transcriptional regulatory protein RafR (rafR) (Pediococcus pentosaceus).